The sequence spans 30 residues: QRMCPKILMKCKQDSDCLLDCVCLKEGFCG.

Cystine bridges form between cysteine 4/cysteine 21, cysteine 11/cysteine 23, and cysteine 17/cysteine 29.

This sequence belongs to the protease inhibitor I7 (squash-type serine protease inhibitor) family.

It is found in the secreted. In terms of biological role, inhibits lysyl endopeptidase and trypsin. This chain is Trypsin inhibitor 3, found in Cucumis melo var. conomon (Oriental pickling melon).